The following is a 427-amino-acid chain: Vitamin D3 receptor (427 aa).

The nuclear receptor DNA-binding region spans 21 to 96 (PRICGVCGDR…IGMMKEFILT (76 aa)). Residues Cys-24, Cys-27, Cys-41, Cys-44, Cys-60, Cys-66, Cys-76, and Cys-79 each coordinate Zn(2+). 2 consecutive NR C4-type zinc fingers follow at residues 24-44 (CGVCGDRATGFHFNAMTCEGC) and 60-84 (CPFNGDCRITKDNRRHCQACRLKRC). The segment at 97-126 (DEEVQRKREMILKRKEEEALKDSLRPKLSE) is hinge. In terms of domain architecture, NR LBD spans 127-423 (EQQRIIAILL…LTPLVLEVFG (297 aa)). Tyr-143 contacts calcitriol. The disordered stretch occupies residues 158 to 183 (RVNDGGGSHPSRPNSRHTPSFSGDSS). Ser-237 is a calcitriol binding site. Positions 246–264 (KMIPGFRDLTSEDQIVLLK) are interaction with coactivator LXXLL motif. Residues Arg-274, Ser-278, His-305, and His-397 each coordinate calcitriol. The 9aaTAD motif lies at 416–424 (PLVLEVFGN).

The protein belongs to the nuclear hormone receptor family. NR1 subfamily. As to quaternary structure, homodimer in the absence of bound vitamin D3. Heterodimer with RXRA after vitamin D3 binding. Interacts with MED1, NCOA1, NCOA2, NCOA3 and NCOA6 coactivators, leading to a strong increase of transcription of target genes. Interacts with the corepressor NCOR1. Interacts with SNW1. Interacts with IRX4, the interaction does not affect its transactivation activity. In terms of processing, ubiquitinated by UBR5, leading to its degradation: UBR5 specifically recognizes and binds ligand-bound VDR when it is not associated with coactivators (NCOAs). In presence of NCOAs, the UBR5-degron is not accessible, preventing its ubiquitination and degradation.

The protein localises to the nucleus. Its subcellular location is the cytoplasm. Nuclear receptor for calcitriol, the active form of vitamin D3 which mediates the action of this vitamin on cells. Enters the nucleus upon vitamin D3 binding where it forms heterodimers with the retinoid X receptor/RXR. The VDR-RXR heterodimers bind to specific response elements on DNA and activate the transcription of vitamin D3-responsive target genes. Plays a central role in calcium homeostasis. This is Vitamin D3 receptor (VDR) from Saguinus oedipus (Cotton-top tamarin).